Here is a 230-residue protein sequence, read N- to C-terminus: Small ribosomal subunit protein uS3 (230 aa).

The KH type-2 domain maps to 39-107 (VRKFLEKKLE…PAQINIAEIR (69 aa)).

This sequence belongs to the universal ribosomal protein uS3 family. Part of the 30S ribosomal subunit. Forms a tight complex with proteins S10 and S14.

Its function is as follows. Binds the lower part of the 30S subunit head. Binds mRNA in the 70S ribosome, positioning it for translation. The chain is Small ribosomal subunit protein uS3 from Shewanella amazonensis (strain ATCC BAA-1098 / SB2B).